The sequence spans 669 residues: DNA ligase (669 aa).

NAD(+)-binding positions include 34 to 38, 83 to 84, and Glu-114; these read DAEYD and SL. Lys-116 functions as the N6-AMP-lysine intermediate in the catalytic mechanism. 4 residues coordinate NAD(+): Arg-137, Glu-171, Lys-287, and Lys-311. Cys-405, Cys-408, Cys-423, and Cys-428 together coordinate Zn(2+). One can recognise a BRCT domain in the interval 591–669; the sequence is NVESYFAGKT…EERFLQELNK (79 aa).

It belongs to the NAD-dependent DNA ligase family. LigA subfamily. Requires Mg(2+) as cofactor. Mn(2+) is required as a cofactor.

The enzyme catalyses NAD(+) + (deoxyribonucleotide)n-3'-hydroxyl + 5'-phospho-(deoxyribonucleotide)m = (deoxyribonucleotide)n+m + AMP + beta-nicotinamide D-nucleotide.. DNA ligase that catalyzes the formation of phosphodiester linkages between 5'-phosphoryl and 3'-hydroxyl groups in double-stranded DNA using NAD as a coenzyme and as the energy source for the reaction. It is essential for DNA replication and repair of damaged DNA. The chain is DNA ligase from Bacillus cereus (strain ATCC 14579 / DSM 31 / CCUG 7414 / JCM 2152 / NBRC 15305 / NCIMB 9373 / NCTC 2599 / NRRL B-3711).